A 423-amino-acid chain; its full sequence is Mannose-6-phosphate isomerase (423 aa).

A2 carries the N-acetylalanine modification. 2 positions are modified to phosphoserine: S102 and S108. Zn(2+)-binding residues include Q110, H112, E137, and H276. Residue R295 is part of the active site.

It belongs to the mannose-6-phosphate isomerase type 1 family. Zn(2+) is required as a cofactor.

It localises to the cytoplasm. It carries out the reaction D-mannose 6-phosphate = D-fructose 6-phosphate. The protein operates within nucleotide-sugar biosynthesis; GDP-alpha-D-mannose biosynthesis; alpha-D-mannose 1-phosphate from D-fructose 6-phosphate: step 1/2. In terms of biological role, isomerase that catalyzes the interconversion of fructose-6-P and mannose-6-P and has a critical role in the supply of D-mannose derivatives required for many eukaryotic glycosylation reactions. This Rattus norvegicus (Rat) protein is Mannose-6-phosphate isomerase.